The chain runs to 447 residues: Cysteine--tRNA ligase (447 aa).

C28 contacts Zn(2+). Positions 30–40 (PTVYNYIHVGN) match the 'HIGH' region motif. C211, H236, and E240 together coordinate Zn(2+). Residues 268–272 (KMSKS) carry the 'KMSKS' region motif. Residue K271 coordinates ATP.

This sequence belongs to the class-I aminoacyl-tRNA synthetase family. As to quaternary structure, monomer. The cofactor is Zn(2+).

It is found in the cytoplasm. The enzyme catalyses tRNA(Cys) + L-cysteine + ATP = L-cysteinyl-tRNA(Cys) + AMP + diphosphate. The polypeptide is Cysteine--tRNA ligase (Streptococcus pneumoniae (strain ATCC BAA-255 / R6)).